We begin with the raw amino-acid sequence, 216 residues long: Vacuolar iron transporter homolog 4 (216 aa).

The disordered stretch occupies residues 1 to 29 (MAATNGDAELTVAEEAKEEEEATDDGGGG). Residues 1-36 (MAATNGDAELTVAEEAKEEEEATDDGGGGVSSQWLR) are Cytoplasmic-facing. The chain crosses the membrane as a helical span at residues 37 to 57 (AAVLGASDGLVSTAALMLGIG). Over 58–65 (AARPADAR) the chain is Vacuolar. The helical transmembrane segment at 66 to 86 (AVLLSGLAGLVAGACSMAIGE) threads the bilayer. Topologically, residues 87 to 134 (YVSVHVQLDVELADLERRRRRGGPAPAGLGLHAAAAAVSRPGQAAAAS) are cytoplasmic. The helical transmembrane segment at 135-155 (ALSFAAGAALPLLAAWFVAGA) threads the bilayer. Topologically, residues 156 to 157 (YR) are vacuolar. The chain crosses the membrane as a helical span at residues 158 to 178 (VRVVVVVATASLALAAFGAAG). Topologically, residues 179 to 190 (ARLGRAPGGRAG) are cytoplasmic. A helical transmembrane segment spans residues 191–211 (LRVVVGGLLAMAATYGVMKLF). Topologically, residues 212–216 (RTHGV) are vacuolar.

It belongs to the CCC1 family.

Its subcellular location is the vacuole membrane. It catalyses the reaction Fe(2+)(in) = Fe(2+)(out). Its function is as follows. Probable vacuolar iron transporter that may be involved in the regulation of iron distribution throughout the plant. This is Vacuolar iron transporter homolog 4 from Oryza sativa subsp. japonica (Rice).